A 202-amino-acid chain; its full sequence is 3-isopropylmalate dehydratase small subunit 2 (202 aa).

Belongs to the LeuD family. LeuD type 1 subfamily. As to quaternary structure, heterodimer of LeuC and LeuD.

It carries out the reaction (2R,3S)-3-isopropylmalate = (2S)-2-isopropylmalate. It participates in amino-acid biosynthesis; L-leucine biosynthesis; L-leucine from 3-methyl-2-oxobutanoate: step 2/4. Catalyzes the isomerization between 2-isopropylmalate and 3-isopropylmalate, via the formation of 2-isopropylmaleate. This Bordetella parapertussis (strain 12822 / ATCC BAA-587 / NCTC 13253) protein is 3-isopropylmalate dehydratase small subunit 2.